Reading from the N-terminus, the 203-residue chain is Glycerol-3-phosphate acyltransferase (203 aa).

Residues 1–3 are Periplasmic-facing; sequence MSA. Residues 4–24 form a helical membrane-spanning segment; sequence IAPGMILFAYLCGSISSAILV. The Cytoplasmic segment spans residues 25 to 52; sequence CRIAGLPDPRESGSGNPGATNVLRIGGK. A helical transmembrane segment spans residues 53 to 73; that stretch reads GAAVAVLIFDILKGMLPVWGA. Over 74 to 80 the chain is Periplasmic; that stretch reads YALGVTP. A helical transmembrane segment spans residues 81–101; it reads FWLGLIAIAACLGHIWPVFFG. The Cytoplasmic segment spans residues 102 to 111; sequence FKGGKGVATA. Residues 112–132 traverse the membrane as a helical segment; it reads FGAIAPIGWDLTGVMAGTWLL. The Periplasmic portion of the chain corresponds to 133–137; it reads TVLLS. Residues 138–158 traverse the membrane as a helical segment; the sequence is GYSSLGAIVSALIAPFYVWWF. At 159–203 the chain is on the cytoplasmic side; the sequence is KPQFTFPVSMLSCLILLRHHDNIQRLWRRQETKIWTKLKKKRQKD.

It belongs to the PlsY family. In terms of assembly, probably interacts with PlsX.

The protein localises to the cell inner membrane. It carries out the reaction sn-glycerol 3-phosphate + an acyl-CoA = a 1-acyl-sn-glycero-3-phosphate + CoA. It catalyses the reaction a fatty acyl-[ACP] + sn-glycerol 3-phosphate = a 1-acyl-sn-glycero-3-phosphate + holo-[ACP]. It functions in the pathway lipid metabolism; phospholipid metabolism. Functionally, catalyzes the transfer of an acyl group from acyl-ACP to glycerol-3-phosphate (G3P) to form lysophosphatidic acid (LPA). This enzyme can also utilize acyl-CoA as fatty acyl donor, but not acyl-PO(4). The sequence is that of Glycerol-3-phosphate acyltransferase from Salmonella agona (strain SL483).